A 274-amino-acid polypeptide reads, in one-letter code: Thiamine kinase (274 aa).

It belongs to the thiamine kinase family.

It catalyses the reaction thiamine + ATP = thiamine phosphate + ADP + H(+). It functions in the pathway cofactor biosynthesis; thiamine diphosphate biosynthesis; thiamine phosphate from thiamine: step 1/1. Its function is as follows. Catalyzes the ATP-dependent phosphorylation of thiamine to thiamine phosphate. Is involved in thiamine salvage. The polypeptide is Thiamine kinase (Escherichia coli (strain K12 / MC4100 / BW2952)).